Consider the following 556-residue polypeptide: Arginine--tRNA ligase (556 aa).

The 'HIGH' region signature appears at 132–142 (ANPTGPIHLGG).

It belongs to the class-I aminoacyl-tRNA synthetase family. In terms of assembly, monomer.

The protein resides in the cytoplasm. The catalysed reaction is tRNA(Arg) + L-arginine + ATP = L-arginyl-tRNA(Arg) + AMP + diphosphate. This Kocuria rhizophila (strain ATCC 9341 / DSM 348 / NBRC 103217 / DC2201) protein is Arginine--tRNA ligase.